Consider the following 240-residue polypeptide: Uridylate kinase (240 aa).

12 to 15 (KLSG) provides a ligand contact to ATP. An involved in allosteric activation by GTP region spans residues 20 to 25 (GDQGYG). Gly54 is a binding site for UMP. Gly55 and Arg59 together coordinate ATP. UMP is bound by residues Asp74 and 135 to 142 (TGNPYFST). The ATP site is built by Asn163, Tyr169, and Asp172.

It belongs to the UMP kinase family. In terms of assembly, homohexamer.

The protein localises to the cytoplasm. It carries out the reaction UMP + ATP = UDP + ADP. The protein operates within pyrimidine metabolism; CTP biosynthesis via de novo pathway; UDP from UMP (UMPK route): step 1/1. With respect to regulation, allosterically activated by GTP. Inhibited by UTP. Catalyzes the reversible phosphorylation of UMP to UDP. The sequence is that of Uridylate kinase from Oceanobacillus iheyensis (strain DSM 14371 / CIP 107618 / JCM 11309 / KCTC 3954 / HTE831).